We begin with the raw amino-acid sequence, 308 residues long: MLAGRDFLSNLDMTSAELRAVMDTAHSMKAGEWRAVKPLSGLSLALVFEKASLRTRTTFDVGMYQLGGHAITLSNTEIGLGTRERVSDVARNLERWVDGVMGRVYLQQTLVELAQHARIPVINGLSDMLHPAQLLADYQTIEEEFGQDLRGKRVVYIGDGNNLANSHIHMGILTGTDVTVVTPVGYEPNAGVLMDAVKAGVEVHLTNDLDAIQGADVLYTDVWISMGQEAEADIRRRAFRGYQVTPEMLETISPDGIFLHCLPAHYGEETVPEATEHPKSRVFDQAENRLHAQKALLYHVLGDMKPRW.

Carbamoyl phosphate is bound by residues arginine 103 and 130 to 133 (HPAQ). L-ornithine-binding positions include asparagine 162, aspartate 221, and 225-226 (SM). Residues 261–262 (CL) and arginine 289 contribute to the carbamoyl phosphate site.

Belongs to the aspartate/ornithine carbamoyltransferase superfamily. OTCase family.

The protein resides in the cytoplasm. The enzyme catalyses carbamoyl phosphate + L-ornithine = L-citrulline + phosphate + H(+). The protein operates within amino-acid biosynthesis; L-arginine biosynthesis; L-arginine from L-ornithine and carbamoyl phosphate: step 1/3. Reversibly catalyzes the transfer of the carbamoyl group from carbamoyl phosphate (CP) to the N(epsilon) atom of ornithine (ORN) to produce L-citrulline. This chain is Ornithine carbamoyltransferase, found in Deinococcus radiodurans (strain ATCC 13939 / DSM 20539 / JCM 16871 / CCUG 27074 / LMG 4051 / NBRC 15346 / NCIMB 9279 / VKM B-1422 / R1).